The primary structure comprises 338 residues: Methionine import ATP-binding protein MetN 1 (338 aa).

Positions 2–241 constitute an ABC transporter domain; that stretch reads IELHQVSKSF…AKHATTKRFV (240 aa). Residue 38–45 coordinates ATP; the sequence is GYSGAGKS.

Belongs to the ABC transporter superfamily. Methionine importer (TC 3.A.1.24) family. In terms of assembly, the complex is composed of two ATP-binding proteins (MetN), two transmembrane proteins (MetI) and a solute-binding protein (MetQ).

It is found in the cell membrane. It catalyses the reaction L-methionine(out) + ATP + H2O = L-methionine(in) + ADP + phosphate + H(+). The catalysed reaction is D-methionine(out) + ATP + H2O = D-methionine(in) + ADP + phosphate + H(+). Its function is as follows. Part of the ABC transporter complex MetNIQ involved in methionine import. Responsible for energy coupling to the transport system. In Listeria monocytogenes serovar 1/2a (strain ATCC BAA-679 / EGD-e), this protein is Methionine import ATP-binding protein MetN 1.